The chain runs to 953 residues: Coatomer subunit beta (953 aa).

Thr-2 is modified (N-acetylthreonine). HEAT repeat units lie at residues 96–131 (HEMI…KEAE), 132–168 (LLEP…NFEH), 240–276 (SERA…SAPT), 277–314 (AIKA…HPAH), 316–353 (RVLQ…SRNV), and 396–433 (DMAA…RFDN). N6-acetyllysine is present on Lys-494.

As to quaternary structure, oligomeric complex that consists of at least the alpha, beta, beta', gamma, delta, epsilon and zeta subunits. Interacts with CAPN8. Interacts with SCYL1 and PRKCE. Interacts with COPG1. Interacts with ARF1 (myristoylated); this interaction is required for binding of COPB1 to Golgi membranes. Interacts (via trunk domain) with ARF1 (via switch I region); the interaction is direct. Interacts with KCNK2 (via N-terminus); this interaction increases the channel-mediated whole cell currents and promotes plasma membrane expression of KCNK2. Interacts with STX17. Interacts with TMEM115. Interacts with TMEM41B. Proteolytically cleaved between Ser-528 and Ser-529 by CAPN8. As to expression, predominantly expressed in the upper one-third of the oxyntic mucosa and in most regions of the pyloric mucosa. Ubiquitously expressed including platelet, liver, heart, spleen, lung and kidney.

The protein resides in the cytoplasm. It localises to the golgi apparatus membrane. The protein localises to the cytoplasmic vesicle. Its subcellular location is the COPI-coated vesicle membrane. It is found in the cell membrane. The protein resides in the endoplasmic reticulum-Golgi intermediate compartment. Its function is as follows. The coatomer is a cytosolic protein complex that binds to dilysine motifs and reversibly associates with Golgi non-clathrin-coated vesicles, which further mediate biosynthetic protein transport from the ER, via the Golgi up to the trans Golgi network. Coatomer complex is required for budding from Golgi membranes, and is essential for the retrograde Golgi-to-ER transport of dilysine-tagged proteins. In mammals, the coatomer can only be recruited by membranes associated to ADP-ribosylation factors (ARFs), which are small GTP-binding proteins; the complex also influences the Golgi structural integrity, as well as the processing, activity, and endocytic recycling of LDL receptors. Involved in the Golgi disassembly and reassembly processes during cell cycle. Involved in autophagy by playing a role in early endosome function. Plays a role in organellar compartmentalization of secretory compartments including endoplasmic reticulum (ER)-Golgi intermediate compartment (ERGIC), Golgi, trans-Golgi network (TGN) and recycling endosomes, and in biosynthetic transport of CAV1. Plays a functional role in facilitating the transport of kappa-type opioid receptor mRNAs into axons and enhances translation of these proteins in cortical neurons. Required for limiting lipid storage in lipid droplets. Involved in lipid homeostasis by regulating the presence of perilipin family members PLIN2 and PLIN3 at the lipid droplet surface and promoting the association of adipocyte triglyceride lipase (PNPLA2) with the lipid droplet surface to mediate lipolysis. This chain is Coatomer subunit beta (Copb1), found in Mus musculus (Mouse).